Reading from the N-terminus, the 392-residue chain is Probable tRNA sulfurtransferase (392 aa).

One can recognise a THUMP domain in the interval 59–166; the sequence is DEIIERVKKV…ECSFVFTKKV (108 aa). Residues 183 to 184, 208 to 209, Arg265, Gly287, and Gln296 contribute to the ATP site; these read LL and HF.

This sequence belongs to the ThiI family.

It is found in the cytoplasm. It carries out the reaction [ThiI sulfur-carrier protein]-S-sulfanyl-L-cysteine + a uridine in tRNA + 2 reduced [2Fe-2S]-[ferredoxin] + ATP + H(+) = [ThiI sulfur-carrier protein]-L-cysteine + a 4-thiouridine in tRNA + 2 oxidized [2Fe-2S]-[ferredoxin] + AMP + diphosphate. The enzyme catalyses [ThiS sulfur-carrier protein]-C-terminal Gly-Gly-AMP + S-sulfanyl-L-cysteinyl-[cysteine desulfurase] + AH2 = [ThiS sulfur-carrier protein]-C-terminal-Gly-aminoethanethioate + L-cysteinyl-[cysteine desulfurase] + A + AMP + 2 H(+). It functions in the pathway cofactor biosynthesis; thiamine diphosphate biosynthesis. Its function is as follows. Catalyzes the ATP-dependent transfer of a sulfur to tRNA to produce 4-thiouridine in position 8 of tRNAs, which functions as a near-UV photosensor. Also catalyzes the transfer of sulfur to the sulfur carrier protein ThiS, forming ThiS-thiocarboxylate. This is a step in the synthesis of thiazole, in the thiamine biosynthesis pathway. The sulfur is donated as persulfide by IscS. This chain is Probable tRNA sulfurtransferase, found in Alkaliphilus metalliredigens (strain QYMF).